A 341-amino-acid polypeptide reads, in one-letter code: MFRLDELAARLGGDVVGDPATTVRRVATLEQAGEGDLSFLANPKYVGRLKSSHASAIIVADSARSLLGEKAGIVTRDPYLYFARVAQLFNPPEAVAPGVHPLADVAVAVPASVAVAAGASIGAGVELGEDVVIGAGSSIGAGVRIGAGTRLAPRVVIYPGCVIGTNCLIHAGAVIGSDGFGFAREKSGAWVKIPQVGRVVIGDDVEIGANTTIDRGALDDTVIGNGVKIDNQIQIGHNVRIGDYTAIAGCVGIAGSTQIGARCMIGGQAGIIGHLTIADDVVISAGTLVTKSIHKPGVYTANLPVQPHADWVKNFAHLRHLDSLAARIRALEQSPDHPESA.

H237 functions as the Proton acceptor in the catalytic mechanism.

Belongs to the transferase hexapeptide repeat family. LpxD subfamily. As to quaternary structure, homotrimer.

It catalyses the reaction a UDP-3-O-[(3R)-3-hydroxyacyl]-alpha-D-glucosamine + a (3R)-hydroxyacyl-[ACP] = a UDP-2-N,3-O-bis[(3R)-3-hydroxyacyl]-alpha-D-glucosamine + holo-[ACP] + H(+). Its pathway is bacterial outer membrane biogenesis; LPS lipid A biosynthesis. Its function is as follows. Catalyzes the N-acylation of UDP-3-O-acylglucosamine using 3-hydroxyacyl-ACP as the acyl donor. Is involved in the biosynthesis of lipid A, a phosphorylated glycolipid that anchors the lipopolysaccharide to the outer membrane of the cell. The protein is UDP-3-O-acylglucosamine N-acyltransferase of Azoarcus sp. (strain BH72).